A 306-amino-acid polypeptide reads, in one-letter code: Serine/threonine-protein phosphatase PP-X homolog 4 (306 aa).

Mn(2+) contacts are provided by Asp-53, His-55, Asp-81, and Asn-113. His-114 functions as the Proton donor in the catalytic mechanism. Residues His-163 and His-237 each contribute to the Mn(2+) site.

This sequence belongs to the PPP phosphatase family. PP-4 (PP-X) subfamily. Mn(2+) serves as cofactor.

It catalyses the reaction O-phospho-L-seryl-[protein] + H2O = L-seryl-[protein] + phosphate. The enzyme catalyses O-phospho-L-threonyl-[protein] + H2O = L-threonyl-[protein] + phosphate. This Paramecium tetraurelia protein is Serine/threonine-protein phosphatase PP-X homolog 4 (Ppx4).